The primary structure comprises 205 residues: Quinone-oxidoreductase QR2 (205 aa).

In terms of domain architecture, Flavodoxin-like spans 5-192 (VYIVYYSTYG…LKQAFHQGMY (188 aa)). Residues 11-15 (STYGH), 112-165 (IFFS…SPYG), and His-136 contribute to the FMN site. Tyr-13 contacts NAD(+).

Belongs to the WrbA family. The cofactor is FMN.

The catalysed reaction is a quinone + NADH + H(+) = a quinol + NAD(+). The enzyme catalyses a quinone + NADPH + H(+) = a quinol + NADP(+). With respect to regulation, inhibited by dicumarol. Functionally, NAD(P)H:quinone oxidoreductase reducing quinones by a two-electron transfer mechanism. Can use either NADPH or NADH as electron donor. Can use menadione, 5-hydroxy-1,4-naphthoquinone (juglone) and 2,6-dimethoxy-p-benzoquinone (DMBQ) as substrates. Mitigates the toxicity of exogenous quinones in the rhizosphere. The sequence is that of Quinone-oxidoreductase QR2 from Triphysaria versicolor (Yellow owl's clover).